Here is a 95-residue protein sequence, read N- to C-terminus: Aspartyl/glutamyl-tRNA(Asn/Gln) amidotransferase subunit C (95 aa).

Belongs to the GatC family. Heterotrimer of A, B and C subunits.

It carries out the reaction L-glutamyl-tRNA(Gln) + L-glutamine + ATP + H2O = L-glutaminyl-tRNA(Gln) + L-glutamate + ADP + phosphate + H(+). The enzyme catalyses L-aspartyl-tRNA(Asn) + L-glutamine + ATP + H2O = L-asparaginyl-tRNA(Asn) + L-glutamate + ADP + phosphate + 2 H(+). Its function is as follows. Allows the formation of correctly charged Asn-tRNA(Asn) or Gln-tRNA(Gln) through the transamidation of misacylated Asp-tRNA(Asn) or Glu-tRNA(Gln) in organisms which lack either or both of asparaginyl-tRNA or glutaminyl-tRNA synthetases. The reaction takes place in the presence of glutamine and ATP through an activated phospho-Asp-tRNA(Asn) or phospho-Glu-tRNA(Gln). This is Aspartyl/glutamyl-tRNA(Asn/Gln) amidotransferase subunit C from Rhodospirillum rubrum (strain ATCC 11170 / ATH 1.1.1 / DSM 467 / LMG 4362 / NCIMB 8255 / S1).